Reading from the N-terminus, the 155-residue chain is SsrA-binding protein (155 aa).

Belongs to the SmpB family.

The protein resides in the cytoplasm. Functionally, required for rescue of stalled ribosomes mediated by trans-translation. Binds to transfer-messenger RNA (tmRNA), required for stable association of tmRNA with ribosomes. tmRNA and SmpB together mimic tRNA shape, replacing the anticodon stem-loop with SmpB. tmRNA is encoded by the ssrA gene; the 2 termini fold to resemble tRNA(Ala) and it encodes a 'tag peptide', a short internal open reading frame. During trans-translation Ala-aminoacylated tmRNA acts like a tRNA, entering the A-site of stalled ribosomes, displacing the stalled mRNA. The ribosome then switches to translate the ORF on the tmRNA; the nascent peptide is terminated with the 'tag peptide' encoded by the tmRNA and targeted for degradation. The ribosome is freed to recommence translation, which seems to be the essential function of trans-translation. The chain is SsrA-binding protein from Lawsonia intracellularis (strain PHE/MN1-00).